The sequence spans 364 residues: UDP-N-acetylglucosamine--N-acetylmuramyl-(pentapeptide) pyrophosphoryl-undecaprenol N-acetylglucosamine transferase (364 aa).

UDP-N-acetyl-alpha-D-glucosamine-binding positions include 16-18, Asn128, Arg166, Ser195, Ile249, and Gln294; that span reads TGG.

This sequence belongs to the glycosyltransferase 28 family. MurG subfamily.

It is found in the cell inner membrane. It catalyses the reaction di-trans,octa-cis-undecaprenyl diphospho-N-acetyl-alpha-D-muramoyl-L-alanyl-D-glutamyl-meso-2,6-diaminopimeloyl-D-alanyl-D-alanine + UDP-N-acetyl-alpha-D-glucosamine = di-trans,octa-cis-undecaprenyl diphospho-[N-acetyl-alpha-D-glucosaminyl-(1-&gt;4)]-N-acetyl-alpha-D-muramoyl-L-alanyl-D-glutamyl-meso-2,6-diaminopimeloyl-D-alanyl-D-alanine + UDP + H(+). Its pathway is cell wall biogenesis; peptidoglycan biosynthesis. Its function is as follows. Cell wall formation. Catalyzes the transfer of a GlcNAc subunit on undecaprenyl-pyrophosphoryl-MurNAc-pentapeptide (lipid intermediate I) to form undecaprenyl-pyrophosphoryl-MurNAc-(pentapeptide)GlcNAc (lipid intermediate II). The polypeptide is UDP-N-acetylglucosamine--N-acetylmuramyl-(pentapeptide) pyrophosphoryl-undecaprenol N-acetylglucosamine transferase (Chromohalobacter salexigens (strain ATCC BAA-138 / DSM 3043 / CIP 106854 / NCIMB 13768 / 1H11)).